The sequence spans 302 residues: Glycine--tRNA ligase alpha subunit (302 aa).

The protein belongs to the class-II aminoacyl-tRNA synthetase family. Tetramer of two alpha and two beta subunits.

It localises to the cytoplasm. The catalysed reaction is tRNA(Gly) + glycine + ATP = glycyl-tRNA(Gly) + AMP + diphosphate. The polypeptide is Glycine--tRNA ligase alpha subunit (Wigglesworthia glossinidia brevipalpis).